A 347-amino-acid polypeptide reads, in one-letter code: 3-isopropylmalate dehydrogenase (347 aa).

76–87 serves as a coordination point for NAD(+); it reads GPKWTDPNNRPE. Arginine 94, arginine 104, arginine 132, and aspartate 217 together coordinate substrate. Mg(2+) contacts are provided by aspartate 217, aspartate 241, and aspartate 245. 275–287 contributes to the NAD(+) binding site; it reads GSAPDIANEDKAN.

Belongs to the isocitrate and isopropylmalate dehydrogenases family. LeuB type 1 subfamily. Homodimer. It depends on Mg(2+) as a cofactor. The cofactor is Mn(2+).

It localises to the cytoplasm. It catalyses the reaction (2R,3S)-3-isopropylmalate + NAD(+) = 4-methyl-2-oxopentanoate + CO2 + NADH. It functions in the pathway amino-acid biosynthesis; L-leucine biosynthesis; L-leucine from 3-methyl-2-oxobutanoate: step 3/4. Functionally, catalyzes the oxidation of 3-carboxy-2-hydroxy-4-methylpentanoate (3-isopropylmalate) to 3-carboxy-4-methyl-2-oxopentanoate. The product decarboxylates to 4-methyl-2 oxopentanoate. The chain is 3-isopropylmalate dehydrogenase from Staphylococcus epidermidis (strain ATCC 35984 / DSM 28319 / BCRC 17069 / CCUG 31568 / BM 3577 / RP62A).